Here is a 1337-residue protein sequence, read N- to C-terminus: MAGDDLVFAVNGEKFEVLSVNPSTTLLEFLRSNTCFKSVKLSCGEGGCGACIVILSKYDPVLDQVEEYSINSCLTLLCSLNGCSITTSDGLGNTEKGFHPIHKRFAGFHASQCGFCTPGMCISLYSALSKAHNSQSSPDYLTALAAEKSIAGNLCRCTGYRPIADACKSFASDVDIEDLGFNSFWRKGESREEMLKKLPPYNPEKDLITFPDFLKEKIKCQHNVLDQTRYHWSTPGSVAELQEILATTNPGKDRGLIKLVVGNTGTGYYKEEKQYGRYIDISHIPEMSMIKKDDREIEIGAVVTISKVIDALMEENTSAYVFKKIGVHMEKVANHFIRNSGSIGGNLVMAQSKSFPSDITTLLLAADASVHMINAGRHEKLRMGEYLVSPPILDTKTVLLKVHIPRWIASSTTGLLFETYRAALRPIGSALPYINAAFLAVVSHDASSSGIIVDKCRLAFGSYGGYHSIRAREVEDFLTGKILSHSVLYEAVRLLKGIIVPSIDTSYSEYKKSLAVGFLFDFLYPLIESGSWDSEGKHIDGHIDPTICLPLLSSAQQVFESKEYHPVGEAIIKFGAEMQASGEAVYVDDIPSLPHCLHGAFIYSTKPLAWIKSVGFSGNVTPIGVLAVITFKDIPEVGQNIGYITMFGTGLLFADEVTISAGQIIALVVADTQKHADMAAHLAVVEYDSRNIGTPVLSVEDAVKRSSLFEVPPEYQPEPVGDISKGMAEADRKIRSVELRLGSQYFFYMETQTALALPDEDNCLVVYSSTQAPEFTQTVIATCLGIPEHNVRVITRRVGGGFGGKAIKSMPVATACALAAKKMQRPVRIYVNRKTDMIMAGGRHPLKITYSVGFRSDGKLTALDLNLFIDAGSDVDVSLVMPQNIMNSLRKYDWGALSFDIKVCKTNLPSRTSLRAPGEVQGSYIAESIIENVASSLKMDVDVVRRINLHTYESLRKFYKQAAGEPDEYTLPLLWDKLEVSADFRRRAESVKEFNRCNIWRKRGISRVPIIHLVIHRPTPGKVSILNDGSVAVEVAGIEVGQGLWTKVQQMVAYGLGMIKCEGSDDLLERIRLLQTDTLSMSQSSYTAGSTTSENCCEAVRLCCGILVERLRPTMNQILENARSVTWDMLIQQANAQSVDLSARTFYKPESSSAEYLNYGVGASEVEVDLVTGRTEIIRSDIIYDCGKSLNPAVDLGQIEGAFVQGIGFFMYEEYTTNENGLVNEEGTWDYKIPTIDTIPKQFNVQILNSGHHKNRVLSSKASGEPPLLVAASVHCATRSAIREARKQYLSWNCIDDDHRERCDLGFELPVPATMPVVKQLCGLESIEKYLEWKTYP.

A 2Fe-2S ferredoxin-type domain is found at 4 to 91 (DDLVFAVNGE…GCSITTSDGL (88 aa)). The [2Fe-2S] cluster site is built by Cys43, Cys48, Cys51, Cys73, Cys113, Cys116, Cys155, and Cys157. Residues 225–409 (LDQTRYHWST…LKVHIPRWIA (185 aa)) form the FAD-binding PCMH-type domain. Residues 259 to 266 (LVVGNTGT), 342 to 346 (SIGGN), Asp358, and Leu399 each bind FAD. Mo-molybdopterin contacts are provided by Gln771, Phe802, and Arg915. The active-site Proton acceptor is Glu1265.

It belongs to the xanthine dehydrogenase family. In terms of assembly, aldehyde oxidases (AO) are homodimers and heterodimers of AO subunits. [2Fe-2S] cluster serves as cofactor. FAD is required as a cofactor. Requires Mo-molybdopterin as cofactor. In terms of tissue distribution, transcripts expressed at high levels in developing siliques and at low levels in dry seeds.

Its subcellular location is the cytoplasm. It carries out the reaction indole-3-acetaldehyde + O2 + H2O = (indol-3-yl)acetate + H2O2 + H(+). It catalyses the reaction an aldehyde + O2 + H2O = a carboxylate + H2O2 + H(+). The catalysed reaction is benzaldehyde + O2 + H2O = benzoate + H2O2 + H(+). The enzyme catalyses hexanal + O2 + H2O = hexanoate + H2O2 + H(+). It carries out the reaction 1-naphthaldehyde + O2 + H2O = 1-naphthoate + H2O2 + H(+). It catalyses the reaction vanillin + O2 + H2O = vanillate + H2O2 + H(+). The catalysed reaction is malonaldehyde + O2 + H2O = 3-oxopropanoate + H2O2 + H(+). The enzyme catalyses citral + O2 + H2O = 3,7-dimethylocta-2,6-dienoate + H2O2 + H(+). It carries out the reaction acrolein + O2 + H2O = acrylate + H2O2 + H(+). It catalyses the reaction (E)-4-hydroxynon-2-enal + O2 + H2O = (E)-4-hydroxynon-2-enoate + H2O2 + H(+). The catalysed reaction is (E)-cinnamaldehyde + O2 + H2O = (E)-cinnamate + H2O2 + H(+). The enzyme catalyses indole-3-carbaldehyde + O2 + H2O = indole-3-carboxylate + H2O2 + H(+). It carries out the reaction propanal + O2 + H2O = propanoate + H2O2 + H(+). It catalyses the reaction dodecanal + O2 + H2O = dodecanoate + H2O2 + H(+). The catalysed reaction is salicylaldehyde + O2 + H2O = salicylate + H2O2 + H(+). Inhibited by Cu(2+). In terms of biological role, aldehyde oxidase with a broad substrate specificity. Involved in the accumulation of benzoic acid (BA) in siliques. Delays and protects siliques from senescence by catalyzing aldehyde detoxification in siliques. Catalyzes the oxidation of an array of aromatic and aliphatic aldehydes, including vanillin and the reactive carbonyl species (RCS) acrolein, 4-hydroxyl-2-nonenal (HNE), and malondialdehyde (MDA). The chain is Aldehyde oxidase 4 from Arabidopsis thaliana (Mouse-ear cress).